A 607-amino-acid polypeptide reads, in one-letter code: Aspartate--tRNA(Asp/Asn) ligase (607 aa).

E168 serves as a coordination point for L-aspartate. The interval 192–195 (QLFK) is aspartate. R214 is an L-aspartate binding site. Residues 214-216 (RDE) and Q223 each bind ATP. Residue H449 participates in L-aspartate binding. E483 contributes to the ATP binding site. Position 490 (R490) interacts with L-aspartate. 535 to 538 (GWDR) lines the ATP pocket. The segment at 578-607 (LEAGVDARPKPEARAQAGTAGPAAPVADPT) is disordered. Positions 580-590 (AGVDARPKPEA) are enriched in basic and acidic residues. Residues 591–607 (RAQAGTAGPAAPVADPT) show a composition bias toward low complexity.

It belongs to the class-II aminoacyl-tRNA synthetase family. Type 1 subfamily. In terms of assembly, homodimer.

It localises to the cytoplasm. The catalysed reaction is tRNA(Asx) + L-aspartate + ATP = L-aspartyl-tRNA(Asx) + AMP + diphosphate. Aspartyl-tRNA synthetase with relaxed tRNA specificity since it is able to aspartylate not only its cognate tRNA(Asp) but also tRNA(Asn). Reaction proceeds in two steps: L-aspartate is first activated by ATP to form Asp-AMP and then transferred to the acceptor end of tRNA(Asp/Asn). The sequence is that of Aspartate--tRNA(Asp/Asn) ligase from Salinispora tropica (strain ATCC BAA-916 / DSM 44818 / JCM 13857 / NBRC 105044 / CNB-440).